The chain runs to 163 residues: Retinoic acid receptor responder protein 2 (163 aa).

Residues 1-20 (MRRLLIPLALWLGAVGVGVA) form the signal peptide. Intrachain disulfides connect Cys77–Cys87, Cys98–Cys117, and Cys101–Cys135. A propeptide spanning residues 158 to 163 (KALPRS) is cleaved from the precursor.

Post-translationally, secreted in an inactive precursor form, prochemerin, which is proteolytically processed by a variety of extracellular proteases to generate forms with differing levels of bioactivity. For example, the removal of six amino acids results in chemerin-157, which exhibits the highest activity, while removal of seven amino acids results in chemerin-156 which has slightly less activity. Some proteases are able to cleave at more than one site and chemerin forms may be sequentially processed by different enzymes to modulate activity levels. The coordinated expression and activity of chemerin-modifying enzymes is essential for regulating its bioactivation, inactivation and, consequently, biological function. Cathepsin G cleaves seven C-terminal amino acids from prochemerin (chemerin-156), elastase is able to cleave six (chemerin-157), eight (chemerin-155) or eleven (chemerin-152), plasmin cleaves five amino acids (chemerin-158), and tryptase cleaves five (chemerin-158) or eight (chemerin-155). Multiple cleavages might be required to fully activate chemerin, with an initial tryptase cleavage resulting in chemerin with low activity (chemerin-158), and a second cleavage by carboxypeptidase N or B producing highly active chemerin (chemerin-157).

It is found in the secreted. Adipocyte-secreted protein (adipokine) that regulates adipogenesis, metabolism and inflammation through activation of the chemokine-like receptor 1 (CMKLR1). Also acts as a ligand for CMKLR2. Can also bind to C-C chemokine receptor-like 2 (CCRL2), but with a lower affinity than it does to CMKLR1 or CMKLR2. Positively regulates adipocyte differentiation, modulates the expression of adipocyte genes involved in lipid and glucose metabolism and might play a role in angiogenesis, a process essential for the expansion of white adipose tissue. Also acts as a pro-inflammatory adipokine, causing an increase in secretion of pro-inflammatory and prodiabetic adipokines, which further impair adipose tissue metabolic function and have negative systemic effects including impaired insulin sensitivity, altered glucose and lipid metabolism, and a decrease in vascular function in other tissues. Can have both pro- and anti-inflammatory properties depending on the modality of enzymatic cleavage by different classes of proteases. Acts as a chemotactic factor for leukocyte populations expressing CMKLR1, particularly immature plasmacytoid dendritic cells, but also immature myeloid DCs, macrophages and natural killer cells. Exerts an anti-inflammatory role by preventing TNF/TNFA-induced VCAM1 expression and monocytes adhesion in vascular endothelial cells. The effect is mediated via inhibiting activation of NF-kappa-B and CRK/p38 through stimulation of AKT1/NOS3 signaling and nitric oxide production. Exhibits an antimicrobial function in the skin. The polypeptide is Retinoic acid receptor responder protein 2 (RARRES2) (Pongo abelii (Sumatran orangutan)).